The following is a 277-amino-acid chain: MNCGKIILLFITIIGVAKSREENCKCGWDNPSRIVNGVETEINEFPMVARLIYPSPGMYCGGTIITPQHIVTAAHCLQKYKRTNYTGIHVVVGEHDYTTDTETNVTKRYTIAEVTIHPNYNSHNNDIAIVKTNERFEYSMKVGPVCLPFNYMTRNLTNETVTALGWGKLRYNGQNSKVLRKVDLHVITREQCETHYGAAIANANLLCTFDVGRDACQNDSGGPILWRSPTTDNLILVGVVNFGRTCADDAPGGNARVTSFMEFIHNATIGETYCKAD.

Positions 1–19 (MNCGKIILLFITIIGVAKS) are cleaved as a signal peptide. Positions 34–269 (IVNGVETEIN…FMEFIHNATI (236 aa)) constitute a Peptidase S1 domain. Cysteine 60 and cysteine 76 form a disulfide bridge. The active-site Charge relay system is the histidine 75. 2 N-linked (GlcNAc...) asparagine glycosylation sites follow: asparagine 84 and asparagine 104. Catalysis depends on aspartate 126, which acts as the Charge relay system. N-linked (GlcNAc...) asparagine glycosylation is found at asparagine 155 and asparagine 158. Intrachain disulfides connect cysteine 192/cysteine 207 and cysteine 216/cysteine 246. N-linked (GlcNAc...) asparagine glycosylation is present at asparagine 218. Catalysis depends on serine 220, which acts as the Charge relay system. Asparagine 266 carries an N-linked (GlcNAc...) asparagine glycan.

This sequence belongs to the peptidase S1 family. As to expression, expressed by the venom duct.

It is found in the secreted. This Polistes dominula (European paper wasp) protein is Venom serine protease.